The sequence spans 101 residues: Urease subunit beta (101 aa).

This sequence belongs to the urease beta subunit family. As to quaternary structure, heterotrimer of UreA (gamma), UreB (beta) and UreC (alpha) subunits. Three heterotrimers associate to form the active enzyme.

It localises to the cytoplasm. It carries out the reaction urea + 2 H2O + H(+) = hydrogencarbonate + 2 NH4(+). Its pathway is nitrogen metabolism; urea degradation; CO(2) and NH(3) from urea (urease route): step 1/1. The polypeptide is Urease subunit beta (Saccharophagus degradans (strain 2-40 / ATCC 43961 / DSM 17024)).